The following is a 524-amino-acid chain: Cytochrome P450 monooxygenase drtD (524 aa).

The helical transmembrane segment at 2–22 (SDTYLVAASGLAVCFFVLYLL) threads the bilayer. Position 418 (Cys418) interacts with heme.

It belongs to the cytochrome P450 family. It depends on heme as a cofactor.

The protein resides in the membrane. Its pathway is secondary metabolite biosynthesis; terpenoid biosynthesis. Functionally, cytochrome P450 monooxygenase; part of the gene cluster that mediates the biosynthesis of various drimane-type sesquiterpene esters, compounds that exhibit diverse biological activities and are widely present in eukaryotes. The pathway begins with the synthesis of the backbone drimenol by the terpene cyclase drtB using farnesyl pyrophosphate (FPP) as substrate. The cytochrome P450 monooxygenase drtD is then responsible for the hydroxylations at C-6, C-9 and C-12, as well as the oxidation of hydroxyl groups at C-6 and C-11 to a ketone and an aldehyde, respectively. Then, the biosynthesis can go in two directions, either the hydroxylated drimenol is further hydroxylated at C-2 and C-3 by an enzyme(s) not associated with the drt cluster, or the FAD-binding oxidoreductase drtC further oxidizes C-11 or C-12 to form the butyrolactone ring. DrtB, drtD and drtC are solely responsible for the formation of the different drimane structures observed during drimane sesquiterpenes biosynthesis. The polyketide synthase drtA synthesizes different lengths (C6 and C8) of PKS chains, which are then oxidized to varying degrees by the short-chain dehydrogenase drtF. Finally, these PKS chains are transferred onto drimane sesquiterpenes by the acyltransferase drtE, forming the sesquiterpene esters. In addition to the different fatty acyl-CoA chains produced by drtA, drtE is also able to use cinnamoyl-CoA as a substrate. This chain is Cytochrome P450 monooxygenase drtD, found in Aspergillus calidoustus.